A 427-amino-acid chain; its full sequence is Peptidase B (427 aa).

Mn(2+) contacts are provided by lysine 195 and aspartate 200. Lysine 207 is an active-site residue. 3 residues coordinate Mn(2+): aspartate 218, aspartate 277, and glutamate 279. Residue arginine 281 is part of the active site.

Belongs to the peptidase M17 family. In terms of assembly, homohexamer. The cofactor is Mn(2+).

It is found in the cytoplasm. It carries out the reaction Release of an N-terminal amino acid, Xaa, from a peptide or arylamide. Xaa is preferably Glu or Asp but may be other amino acids, including Leu, Met, His, Cys and Gln.. Probably plays an important role in intracellular peptide degradation. The sequence is that of Peptidase B from Escherichia fergusonii (strain ATCC 35469 / DSM 13698 / CCUG 18766 / IAM 14443 / JCM 21226 / LMG 7866 / NBRC 102419 / NCTC 12128 / CDC 0568-73).